We begin with the raw amino-acid sequence, 796 residues long: Polyribonucleotide nucleotidyltransferase (796 aa).

Asp490 and Asp496 together coordinate Mg(2+). The KH domain occupies 557–616 (PRIESIFINKDKIRNVIGSGGKNIRDICEKTGAKIEIIQDGTVMIYAVNNEAVEYAKSMI). Residues 626 to 693 (GKVFEGTVVE…DREHVQLSMR (68 aa)) enclose the S1 motif domain. The segment covering 714 to 736 (SFSDDSSSSGTSSSGSSFKESYS) has biased composition (low complexity). The tract at residues 714–796 (SFSDDSSSSG…HEVPRKPRFF (83 aa)) is disordered. The segment covering 740-755 (HGSHEKRRSGGSRSSR) has biased composition (basic residues). Over residues 771-784 (SDFGNNNRSFSNSR) the composition is skewed to low complexity. Residues 785–796 (NGHEVPRKPRFF) show a composition bias toward basic and acidic residues.

Belongs to the polyribonucleotide nucleotidyltransferase family. Mg(2+) is required as a cofactor.

The protein resides in the cytoplasm. The catalysed reaction is RNA(n+1) + phosphate = RNA(n) + a ribonucleoside 5'-diphosphate. Functionally, involved in mRNA degradation. Catalyzes the phosphorolysis of single-stranded polyribonucleotides processively in the 3'- to 5'-direction. This chain is Polyribonucleotide nucleotidyltransferase, found in Ehrlichia canis (strain Jake).